Consider the following 251-residue polypeptide: Flap endonuclease Xni (251 aa).

Asp104 provides a ligand contact to Mg(2+). One can recognise a 5'-3' exonuclease domain in the interval 160-249 (VTPEQLADYW…LDGNLQQLRL (90 aa)). Leu171, Ala172, Pro180, Val182, and Ile185 together coordinate K(+). Positions 184 to 189 (GIGPKS) are interaction with DNA.

The protein belongs to the Xni family. Requires Mg(2+) as cofactor. K(+) serves as cofactor.

In terms of biological role, has flap endonuclease activity. During DNA replication, flap endonucleases cleave the 5'-overhanging flap structure that is generated by displacement synthesis when DNA polymerase encounters the 5'-end of a downstream Okazaki fragment. This chain is Flap endonuclease Xni, found in Klebsiella pneumoniae subsp. pneumoniae (strain ATCC 700721 / MGH 78578).